The following is an 83-amino-acid chain: Neurotoxin LmNaTx3 (83 aa).

A signal peptide spans 1-21; that stretch reads MQLKIQLLMLVLMIVLTDVYS. Residues 22–83 enclose the LCN-type CS-alpha/beta domain; that stretch reads KDGFIVSKKN…NIAMKNKNYC (62 aa). Intrachain disulfides connect cysteine 32/cysteine 83, cysteine 36/cysteine 59, cysteine 45/cysteine 64, and cysteine 49/cysteine 66.

The protein belongs to the long (4 C-C) scorpion toxin superfamily. Sodium channel inhibitor family. Alpha subfamily. Expressed by the venom gland.

The protein resides in the secreted. Its function is as follows. Binds voltage-independently at site-3 of voltage-gated sodium channels (Nav) and inhibits the inactivation of the activated channels, thereby blocking neuronal transmission. In Lychas mucronatus (Chinese swimming scorpion), this protein is Neurotoxin LmNaTx3.